The chain runs to 2279 residues: Zinc finger protein 318 (2279 aa).

Low complexity-rich tracts occupy residues 1 to 12 and 25 to 39; these read MYRSSARSSVSS and SGRSSGSSSGPARRS. Disordered stretches follow at residues 1-140 and 164-189; these read MYRS…PGLC and RRRLSDRLGSPVDNLEDMDRDDLTDD. The interaction with AR stretch occupies residues 1–1092; it reads MYRSSARSSV…THMHNKKHTQ (1092 aa). At Ser40 the chain carries Phosphoserine. A compositionally biased stretch (basic residues) spans 53–67; sequence PARRPRSPSGHRGRR. 2 positions are modified to phosphoserine: Ser79 and Ser81. The segment covering 110-132 has biased composition (basic and acidic residues); it reads SRGESRADYARDGRGDHPGDSGS. Phosphoserine is present on residues Ser136 and Ser173. Positions 177-188 are enriched in acidic residues; it reads NLEDMDRDDLTD. Tyr205 is modified (phosphotyrosine). Phosphoserine occurs at positions 207 and 214. Disordered stretches follow at residues 279–346 and 397–416; these read TVKI…DGGG and LESFSSSTSSSQDHPLYSGH. Basic and acidic residues predominate over residues 311 to 333; it reads LDPEFRELDLARRKREEEEERSR. The stretch at 315-343 forms a coiled coil; sequence FRELDLARRKREEEEERSRSLSQELVGVD. 4 positions are modified to phosphoserine: Ser464, Ser472, Ser501, and Ser527. 2 disordered regions span residues 514–533 and 540–570; these read LADSTSTQEKRRRSFPDIED and GDEEEDLKAESVPKPLGSSESEVMRQKASSL. Glycyl lysine isopeptide (Lys-Gly) (interchain with G-Cter in SUMO2) cross-links involve residues Lys547, Lys553, Lys566, and Lys578. Positions 664 to 683 are enriched in basic and acidic residues; it reads FSADRRSSDPHRLESREAHH. The interval 664-709 is disordered; that stretch reads FSADRRSSDPHRLESREAHHSNTHSPEVSHPHPPSPVDPYLLTKNS. Thr842 carries the phosphothreonine modification. Positions 876-980 form a coiled coil; it reads EKISDEKNRA…SELDKVAQIL (105 aa). Composition is skewed to basic and acidic residues over residues 922 to 941 and 989 to 1012; these read QQGEMLRKKRREKDGHKDPL and QKSLSDSREPTEKPGKAEKSKSPE. Disordered stretches follow at residues 922 to 942 and 989 to 1051; these read QQGEMLRKKRREKDGHKDPLL and QKSL…TKQL. Phosphoserine is present on Ser1010. Low complexity predominate over residues 1013-1023; the sequence is KVSSFSNSSSN. A compositionally biased stretch (basic and acidic residues) spans 1024–1034; it reads KESKVNNEKFR. A Phosphoserine modification is found at Ser1037. 2 Matrin-type zinc fingers span residues 1063–1097 and 1136–1166; these read AGNHWCKDCNTICGTMFDFFTHMHNKKHTQTLDPY and FYCQLCEEFLGDPISGEQHVKGHQHNEKYKK. Composition is skewed to basic and acidic residues over residues 1195 to 1235, 1242 to 1251, 1258 to 1267, 1279 to 1288, and 1296 to 1316; these read RRQS…KLED, NSPEKAENKR, QLKEEVKKES, KKPEKEEEKS, and SKEEILESSKDKEDGKTEAGK. The segment at 1195 to 1319 is disordered; that stretch reads RRQSELKRKL…GKTEAGKAKP (125 aa). A phosphoserine mark is found at Ser1243 and Ser1267. Ser1420 is subject to Phosphoserine. 4 disordered regions span residues 1428-1463, 1577-1628, 1702-1735, and 1753-1775; these read AEKSEPSHLPEQILPPPPPPPPPPPPPPPVIPHPAA, GKGA…EELH, SSFQSDTSRDISPEKSELDLGEPGPPGVEPPPQL, and ESVNQDKESQELRKSEDCRESEI. Positions 1440–1462 are enriched in pro residues; that stretch reads ILPPPPPPPPPPPPPPPVIPHPA. The segment covering 1602–1623 has biased composition (low complexity); the sequence is SNLSRTKSSDTSSTSPLNSSAS. The span at 1708-1719 shows a compositional bias: basic and acidic residues; it reads TSRDISPEKSEL. Position 1713 is a phosphoserine (Ser1713). Pro residues predominate over residues 1724-1734; it reads PGPPGVEPPPQ. A coiled-coil region spans residues 1768–1792; sequence EDCRESEIETNTELKERVKELSEGI. A phosphoserine mark is found at Ser1856, Ser1896, Ser1971, Ser2030, Ser2035, Ser2091, Ser2101, Ser2189, Ser2192, and Ser2243. The disordered stretch occupies residues 2252-2279; it reads DNMVPQGMPEQETTVGAIQDHTESSVHN.

As to quaternary structure, homodimer. Heterodimer of isoform 1 and isoform 2. Isoform 1 and isoform 2 interact with AR. As to expression, expressed in endocrine tissue.

The protein localises to the nucleus. In terms of biological role, acts as a transcriptional corepressor for AR-mediated transactivation function. May act as a transcriptional regulator during spermatogenesis and, in particular, during meiotic division. Its function is as follows. Acts as a transcriptional coactivator for AR-mediated transactivation function. May act as a transcriptional regulator during spermatogenesis and, in particular, during meiotic division. This chain is Zinc finger protein 318 (ZNF318), found in Homo sapiens (Human).